The following is a 153-amino-acid chain: Insulin-like growth factor 1 (153 aa).

The interval 49-77 (GPETLCGAELVDALQFVCGDRGFYFNKPT) is b. 3 cysteine pairs are disulfide-bonded: Cys54/Cys96, Cys66/Cys109, and Cys95/Cys100. The segment at 78 to 89 (GYGSSSRRAPQT) is c. Residues 90–110 (GIVDECCFRSCDLRRLEMYCA) are a. Positions 111 to 118 (PLKPAKSA) are d. Positions 119–153 (RSVRAQRHTDMPKAQKEVHLKNASRGSAGNKNYRM) are cleaved as a propeptide — e peptide. Positions 120-153 (SVRAQRHTDMPKAQKEVHLKNASRGSAGNKNYRM) are disordered. The span at 125 to 138 (RHTDMPKAQKEVHL) shows a compositional bias: basic and acidic residues. Positions 142 to 153 (SRGSAGNKNYRM) are enriched in polar residues.

The protein belongs to the insulin family. As to quaternary structure, forms a ternary complex with IGFR1 and ITGAV:ITGB3. Forms a ternary complex with IGFR1 and ITGA6:ITGB4. Forms a ternary complex with IGFBP3 and ALS.

Its subcellular location is the secreted. Functionally, the insulin-like growth factors, isolated from plasma, are structurally and functionally related to insulin but have a much higher growth-promoting activity. May be a physiological regulator of [1-14C]-2-deoxy-D-glucose (2DG) transport and glycogen synthesis in osteoblasts. Stimulates glucose transport in bone-derived osteoblastic (PyMS) cells and is effective at much lower concentrations than insulin, not only regarding glycogen and DNA synthesis but also with regard to enhancing glucose uptake. May play a role in synapse maturation. Ca(2+)-dependent exocytosis of IGF1 is required for sensory perception of smell in the olfactory bulb. Acts as a ligand for IGF1R. Binds to the alpha subunit of IGF1R, leading to the activation of the intrinsic tyrosine kinase activity which autophosphorylates tyrosine residues in the beta subunit thus initiating a cascade of down-stream signaling events leading to activation of the PI3K-AKT/PKB and the Ras-MAPK pathways. Binds to integrins ITGAV:ITGB3 and ITGA6:ITGB4. Its binding to integrins and subsequent ternary complex formation with integrins and IGFR1 are essential for IGF1 signaling. Induces the phosphorylation and activation of IGFR1, MAPK3/ERK1, MAPK1/ERK2 and AKT1. As part of the MAPK/ERK signaling pathway, acts as a negative regulator of apoptosis in cardiomyocytes via promotion of STUB1/CHIP-mediated ubiquitination and degradation of ICER-type isoforms of CREM. The polypeptide is Insulin-like growth factor 1 (Canis lupus familiaris (Dog)).